The following is a 223-amino-acid chain: Serine/threonine/tyrosine-interacting protein (223 aa).

The Tyrosine-protein phosphatase domain maps to 28-176; the sequence is EMQEILPGLF…LQEYEAIYLA (149 aa). The Interaction with FBXW7 signature appears at 76–78; that stretch reads FQQ. Phosphoserine occurs at positions 184, 193, and 201. The disordered stretch occupies residues 197–223; that stretch reads GTTGSLKRTHEEEDDFGTMQVATAQNG.

This sequence belongs to the protein-tyrosine phosphatase family. Non-receptor class subfamily. As to quaternary structure, interacts with MAPK1; independently of MAPK1 phosphorylation status. Interacts with CARHSP1/Crhsp-24. Interacts (via FQQ motif) with FBXW7 isoforms 1 (via F-box domain) and 3 (via F-box domain); the interaction is direct and prevents FBXW7 interaction with SKP1, a component of the SCF(FBXW7) complex. Does not interact with FBXW7 isoform 2.

It is found in the nucleus. The protein resides in the cytoplasm. Its subcellular location is the cytosol. In terms of biological role, catalytically inactive phosphatase. Acts as a nuclear anchor for MAPK1/MAPK3 (ERK1/ERK2). Modulates cell-fate decisions and cell migration by spatiotemporal regulation of MAPK1/MAPK3 (ERK1/ERK2). By binding to the F-box of FBXW7, prevents the assembly of FBXW7 into the SCF E3 ubiquitin-protein ligase complex, and thereby inhibits degradation of its substrates. Plays a role in spermatogenesis. The protein is Serine/threonine/tyrosine-interacting protein of Homo sapiens (Human).